A 592-amino-acid chain; its full sequence is Laccase PFICI_06862 (592 aa).

An N-terminal signal peptide occupies residues 1–19; that stretch reads MYIQTQFASLLLLAGTSLA. Asparagine 26 is a glycosylation site (N-linked (GlcNAc...) asparagine). 2 consecutive Plastocyanin-like domains span residues 32-142 and 173-350; these read QWSS…WIAP and VVIS…RYPG. Cu cation is bound by residues histidine 78, histidine 80, histidine 123, and histidine 125. N-linked (GlcNAc...) asparagine glycans are attached at residues asparagine 370, asparagine 407, and asparagine 454. The Plastocyanin-like 3 domain occupies 445–563; sequence SDVQGGSMQN…AGQQVVLLEG (119 aa). Histidine 475 lines the Cu cation pocket. N-linked (GlcNAc...) asparagine glycosylation is present at asparagine 524.

Belongs to the multicopper oxidase family.

It is found in the cell surface. Its pathway is pigment biosynthesis; melanin biosynthesis. Laccase involved the biosynthesis of dihydroxynaphthalene (DHN)-melanin, a bluish-green pigment forming a dark layer in the conidial wall that protects the conidia from UV radiations. The first step of the pathway is the production of the pentaketide 1,3,6,8-tetrahydroxynaphthalene (1,3,6,8-THN or T4HN) by the polyketide synthase PfmaE though condensation of acetyl-CoA with malonyl-CoA. T4HN is not stable and easily oxidizes into the stable form flaviolin. T4HN is also substrate of the hydroxynaphthalene reductase PfmaG to yield scytalone. The scytalone dehydratase PfmaJ then reduces scytalone to 1,3,8-THN. 1,3,8-THN is then substrate of the hydroxynaphthalene reductase PfmaI to yield vermelone. Vermelone is further converted by the multicopper oxidase PfmaD to 1,8-DHN. Finally the laccase PFICI_06862 transforms 1,8-DHN to DHN-melanin. The roles of the 5-oxoprolinase PfmaA and the proline iminopeptidase PfmaB within the cluster have not been elucidated yet. The protein is Laccase PFICI_06862 of Pestalotiopsis fici (strain W106-1 / CGMCC3.15140).